The following is a 376-amino-acid chain: Mitogen-activated protein kinase 6 (376 aa).

One can recognise a Protein kinase domain in the interval 43-329; sequence APPIRPIGRG…VDEALHHPYL (287 aa). Residues 49–57 and lysine 72 contribute to the ATP site; that span reads IGRGAYGIV. Aspartate 169 serves as the catalytic Proton acceptor. Threonine 201 carries the post-translational modification Phosphothreonine. A TXY motif is present at residues 201-203; it reads TEY. Position 203 is a phosphotyrosine (tyrosine 203).

The protein belongs to the protein kinase superfamily. CMGC Ser/Thr protein kinase family. MAP kinase subfamily. In terms of processing, dually phosphorylated on Thr-201 and Tyr-203, which activates the enzyme.

The catalysed reaction is L-seryl-[protein] + ATP = O-phospho-L-seryl-[protein] + ADP + H(+). It catalyses the reaction L-threonyl-[protein] + ATP = O-phospho-L-threonyl-[protein] + ADP + H(+). Activated by threonine and tyrosine phosphorylation. The sequence is that of Mitogen-activated protein kinase 6 (MPK6) from Oryza sativa subsp. japonica (Rice).